The following is a 353-amino-acid chain: Ferrochelatase (353 aa).

Basic and acidic residues predominate over residues 1 to 13 (MTLERTGRDEEKA). The segment at 1–23 (MTLERTGRDEEKALTQPPSGHSS) is disordered. Residues histidine 223 and glutamate 304 each contribute to the Fe cation site.

This sequence belongs to the ferrochelatase family.

Its subcellular location is the cytoplasm. The enzyme catalyses heme b + 2 H(+) = protoporphyrin IX + Fe(2+). It participates in porphyrin-containing compound metabolism; protoheme biosynthesis; protoheme from protoporphyrin-IX: step 1/1. Its function is as follows. Catalyzes the ferrous insertion into protoporphyrin IX. The chain is Ferrochelatase from Chelativorans sp. (strain BNC1).